Consider the following 130-residue polypeptide: Large ribosomal subunit protein bL17 (130 aa).

This sequence belongs to the bacterial ribosomal protein bL17 family. As to quaternary structure, part of the 50S ribosomal subunit. Contacts protein L32.

This is Large ribosomal subunit protein bL17 from Paraburkholderia xenovorans (strain LB400).